Here is a 184-residue protein sequence, read N- to C-terminus: ATP synthase subunit b, chloroplastic (184 aa).

Residues 27–49 (LATNPINLSIVIGVLIFFGKGVL) traverse the membrane as a helical segment.

It belongs to the ATPase B chain family. As to quaternary structure, F-type ATPases have 2 components, F(1) - the catalytic core - and F(0) - the membrane proton channel. F(1) has five subunits: alpha(3), beta(3), gamma(1), delta(1), epsilon(1). F(0) has four main subunits: a(1), b(1), b'(1) and c(10-14). The alpha and beta chains form an alternating ring which encloses part of the gamma chain. F(1) is attached to F(0) by a central stalk formed by the gamma and epsilon chains, while a peripheral stalk is formed by the delta, b and b' chains.

The protein localises to the plastid. It is found in the chloroplast thylakoid membrane. Functionally, f(1)F(0) ATP synthase produces ATP from ADP in the presence of a proton or sodium gradient. F-type ATPases consist of two structural domains, F(1) containing the extramembraneous catalytic core and F(0) containing the membrane proton channel, linked together by a central stalk and a peripheral stalk. During catalysis, ATP synthesis in the catalytic domain of F(1) is coupled via a rotary mechanism of the central stalk subunits to proton translocation. Component of the F(0) channel, it forms part of the peripheral stalk, linking F(1) to F(0). The polypeptide is ATP synthase subunit b, chloroplastic (Lotus japonicus (Lotus corniculatus var. japonicus)).